Here is a 172-residue protein sequence, read N- to C-terminus: C-phycocyanin beta subunit (172 aa).

N4-methylasparagine is present on Asn72. Cys82 and Cys153 together coordinate (2R,3E)-phycocyanobilin.

It belongs to the phycobiliprotein family. Heterodimer of an alpha and a beta subunit, which further assembles into trimers and the trimers into hexamers. Contains two covalently linked bilin chromophores.

It localises to the cellular thylakoid membrane. In terms of biological role, light-harvesting photosynthetic bile pigment-protein from the phycobiliprotein complex (phycobilisome, PBS). Phycocyanin is the major phycobiliprotein in the PBS rod. The protein is C-phycocyanin beta subunit (cpcB) of Synechocystis sp. (strain PCC 6701).